The following is a 286-amino-acid chain: ATP synthase gamma chain (286 aa).

The protein belongs to the ATPase gamma chain family. As to quaternary structure, F-type ATPases have 2 components, CF(1) - the catalytic core - and CF(0) - the membrane proton channel. CF(1) has five subunits: alpha(3), beta(3), gamma(1), delta(1), epsilon(1). CF(0) has three main subunits: a, b and c.

It localises to the cell inner membrane. In terms of biological role, produces ATP from ADP in the presence of a proton gradient across the membrane. The gamma chain is believed to be important in regulating ATPase activity and the flow of protons through the CF(0) complex. The polypeptide is ATP synthase gamma chain (Shewanella baltica (strain OS223)).